We begin with the raw amino-acid sequence, 340 residues long: Glycerol-3-phosphate dehydrogenase [NAD(P)+] (340 aa).

Positions 11, 12, 32, 33, and 106 each coordinate NADPH. Residues lysine 106, glycine 138, and serine 140 each contribute to the sn-glycerol 3-phosphate site. Alanine 142 contributes to the NADPH binding site. Sn-glycerol 3-phosphate contacts are provided by lysine 193, aspartate 246, serine 256, arginine 257, and asparagine 258. Residue lysine 193 is the Proton acceptor of the active site. Arginine 257 is an NADPH binding site. NADPH is bound by residues valine 281 and glutamate 283.

It belongs to the NAD-dependent glycerol-3-phosphate dehydrogenase family.

The protein resides in the cytoplasm. It carries out the reaction sn-glycerol 3-phosphate + NAD(+) = dihydroxyacetone phosphate + NADH + H(+). It catalyses the reaction sn-glycerol 3-phosphate + NADP(+) = dihydroxyacetone phosphate + NADPH + H(+). Its pathway is membrane lipid metabolism; glycerophospholipid metabolism. Functionally, catalyzes the reduction of the glycolytic intermediate dihydroxyacetone phosphate (DHAP) to sn-glycerol 3-phosphate (G3P), the key precursor for phospholipid synthesis. This Shouchella clausii (strain KSM-K16) (Alkalihalobacillus clausii) protein is Glycerol-3-phosphate dehydrogenase [NAD(P)+].